A 206-amino-acid chain; its full sequence is Cytochrome c oxidase assembly factor 8 (206 aa).

The transit peptide at 1–39 (MLPCAAGARGRGAMVVLRAGKKTFLPPLCRAFACRGCQL) directs the protein to the mitochondrion.

It belongs to the COA8 family. In terms of processing, N-terminal mitochondrial targeting sequence is cleaved from the mature protein once in the mitochondrion. In normal conditions, the cytoplasmic precursor protein is rapidly degraded by the ubiquitination-proteasome system (UPS). Oxidative stress induces protein stabilization and import into mitochondria where it protects COX from degradation. In terms of tissue distribution, expressed in fibroblasts.

It is found in the mitochondrion inner membrane. Functionally, required for cytochrome c complex (COX) IV assembly and function Protects COX assembly from oxidation-induced degradation, COX being the terminal component of the mitochondrial respiratory chain. The protein is Cytochrome c oxidase assembly factor 8 of Homo sapiens (Human).